The following is a 244-amino-acid chain: Type III pantothenate kinase (244 aa).

9-16 (DAGNSSLK) lines the ATP pocket. Substrate contacts are provided by residues tyrosine 90 and 97–100 (GVDR). Aspartate 99 acts as the Proton acceptor in catalysis. Threonine 122 is an ATP binding site. Position 172 (threonine 172) interacts with substrate.

It belongs to the type III pantothenate kinase family. In terms of assembly, homodimer. It depends on NH4(+) as a cofactor. Requires K(+) as cofactor.

Its subcellular location is the cytoplasm. It carries out the reaction (R)-pantothenate + ATP = (R)-4'-phosphopantothenate + ADP + H(+). It participates in cofactor biosynthesis; coenzyme A biosynthesis; CoA from (R)-pantothenate: step 1/5. Its function is as follows. Catalyzes the phosphorylation of pantothenate (Pan), the first step in CoA biosynthesis. This Thiobacillus denitrificans (strain ATCC 25259 / T1) protein is Type III pantothenate kinase.